Reading from the N-terminus, the 197-residue chain is Probable GTP-binding protein EngB (197 aa).

The region spanning 22 to 195 is the EngB-type G domain; that stretch reads QLPELALAGR…WRTILNHLKV (174 aa). Residues 30 to 37, 57 to 61, 75 to 78, 142 to 145, and 174 to 176 each bind GTP; these read GRSNVGKS, GKTQT, DVPG, TKAD, and FSS. Mg(2+) contacts are provided by S37 and T59.

The protein belongs to the TRAFAC class TrmE-Era-EngA-EngB-Septin-like GTPase superfamily. EngB GTPase family. It depends on Mg(2+) as a cofactor.

Its function is as follows. Necessary for normal cell division and for the maintenance of normal septation. The sequence is that of Probable GTP-binding protein EngB from Shouchella clausii (strain KSM-K16) (Alkalihalobacillus clausii).